The following is a 294-amino-acid chain: Keratin-like protein KRT222 (294 aa).

The IF rod domain maps to 1-150 (MELSQLLNEI…RLLEQEEIRY (150 aa)). A coiled-coil region spans residues 1–151 (MELSQLLNEI…LLEQEEIRYY (151 aa)).

It belongs to the intermediate filament family.

In Mus musculus (Mouse), this protein is Keratin-like protein KRT222 (Krt222).